The sequence spans 305 residues: UDP-3-O-acyl-N-acetylglucosamine deacetylase (305 aa).

Zn(2+)-binding residues include H79, H238, and D242. H265 functions as the Proton donor in the catalytic mechanism.

The protein belongs to the LpxC family. Zn(2+) is required as a cofactor.

It carries out the reaction a UDP-3-O-[(3R)-3-hydroxyacyl]-N-acetyl-alpha-D-glucosamine + H2O = a UDP-3-O-[(3R)-3-hydroxyacyl]-alpha-D-glucosamine + acetate. It participates in glycolipid biosynthesis; lipid IV(A) biosynthesis; lipid IV(A) from (3R)-3-hydroxytetradecanoyl-[acyl-carrier-protein] and UDP-N-acetyl-alpha-D-glucosamine: step 2/6. Functionally, catalyzes the hydrolysis of UDP-3-O-myristoyl-N-acetylglucosamine to form UDP-3-O-myristoylglucosamine and acetate, the committed step in lipid A biosynthesis. The polypeptide is UDP-3-O-acyl-N-acetylglucosamine deacetylase (Vibrio campbellii (strain ATCC BAA-1116)).